An 83-amino-acid polypeptide reads, in one-letter code: Cytochrome b559 subunit alpha (83 aa).

A helical transmembrane segment spans residues 21–35 (VIHSITIPSLFIAGW). Histidine 23 is a binding site for heme.

Belongs to the PsbE/PsbF family. Heterodimer of an alpha subunit and a beta subunit. PSII is composed of 1 copy each of membrane proteins PsbA, PsbB, PsbC, PsbD, PsbE, PsbF, PsbH, PsbI, PsbJ, PsbK, PsbL, PsbM, PsbT, PsbX, PsbY, PsbZ, Psb30/Ycf12, at least 3 peripheral proteins of the oxygen-evolving complex and a large number of cofactors. It forms dimeric complexes. It depends on heme b as a cofactor.

It is found in the plastid. Its subcellular location is the chloroplast thylakoid membrane. This b-type cytochrome is tightly associated with the reaction center of photosystem II (PSII). PSII is a light-driven water:plastoquinone oxidoreductase that uses light energy to abstract electrons from H(2)O, generating O(2) and a proton gradient subsequently used for ATP formation. It consists of a core antenna complex that captures photons, and an electron transfer chain that converts photonic excitation into a charge separation. This is Cytochrome b559 subunit alpha from Agrostis stolonifera (Creeping bentgrass).